The chain runs to 113 residues: Ribosome-binding factor A (113 aa).

This sequence belongs to the RbfA family. In terms of assembly, monomer. Binds 30S ribosomal subunits, but not 50S ribosomal subunits or 70S ribosomes.

The protein localises to the cytoplasm. In terms of biological role, one of several proteins that assist in the late maturation steps of the functional core of the 30S ribosomal subunit. Associates with free 30S ribosomal subunits (but not with 30S subunits that are part of 70S ribosomes or polysomes). Required for efficient processing of 16S rRNA. May interact with the 5'-terminal helix region of 16S rRNA. The polypeptide is Ribosome-binding factor A (Lactococcus lactis subsp. cremoris (Streptococcus cremoris)).